Consider the following 238-residue polypeptide: ATP synthase subunit a (238 aa).

A run of 5 helical transmembrane segments spans residues 18–38 (LTLL…VFWA), 76–96 (YSLL…LGLF), 114–134 (NLAF…IEGV), 166–186 (SLAI…GLIV), and 193–213 (VYWW…SVFI).

It belongs to the ATPase A chain family. As to quaternary structure, F-type ATPases have 2 components, CF(1) - the catalytic core - and CF(0) - the membrane proton channel. CF(1) has five subunits: alpha(3), beta(3), gamma(1), delta(1), epsilon(1). CF(0) has three main subunits: a(1), b(2) and c(9-12). The alpha and beta chains form an alternating ring which encloses part of the gamma chain. CF(1) is attached to CF(0) by a central stalk formed by the gamma and epsilon chains, while a peripheral stalk is formed by the delta and b chains.

Its subcellular location is the cell membrane. Key component of the proton channel; it plays a direct role in the translocation of protons across the membrane. The polypeptide is ATP synthase subunit a (Streptococcus pyogenes serotype M1).